Consider the following 185-residue polypeptide: Ribosome-recycling factor (185 aa).

This sequence belongs to the RRF family.

It is found in the cytoplasm. Its function is as follows. Responsible for the release of ribosomes from messenger RNA at the termination of protein biosynthesis. May increase the efficiency of translation by recycling ribosomes from one round of translation to another. In Salmonella arizonae (strain ATCC BAA-731 / CDC346-86 / RSK2980), this protein is Ribosome-recycling factor.